Consider the following 693-residue polypeptide: Elongation factor G (693 aa).

The 276-residue stretch at 8-283 folds into the tr-type G domain; it reads PQQRNIGIMA…AVVEYLPSPV (276 aa). Residues 17–24, 81–85, and 135–138 each bind GTP; these read AHIDAGKT, DTPGH, and NKMD.

This sequence belongs to the TRAFAC class translation factor GTPase superfamily. Classic translation factor GTPase family. EF-G/EF-2 subfamily.

It is found in the cytoplasm. In terms of biological role, catalyzes the GTP-dependent ribosomal translocation step during translation elongation. During this step, the ribosome changes from the pre-translocational (PRE) to the post-translocational (POST) state as the newly formed A-site-bound peptidyl-tRNA and P-site-bound deacylated tRNA move to the P and E sites, respectively. Catalyzes the coordinated movement of the two tRNA molecules, the mRNA and conformational changes in the ribosome. The sequence is that of Elongation factor G from Oleidesulfovibrio alaskensis (strain ATCC BAA-1058 / DSM 17464 / G20) (Desulfovibrio alaskensis).